The sequence spans 250 residues: tRNA (guanine-N(1)-)-methyltransferase (250 aa).

S-adenosyl-L-methionine contacts are provided by residues G108 and 127-132; that span reads LGDFVL.

It belongs to the RNA methyltransferase TrmD family. As to quaternary structure, homodimer.

The protein resides in the cytoplasm. The enzyme catalyses guanosine(37) in tRNA + S-adenosyl-L-methionine = N(1)-methylguanosine(37) in tRNA + S-adenosyl-L-homocysteine + H(+). Specifically methylates guanosine-37 in various tRNAs. This Streptococcus agalactiae serotype Ia (strain ATCC 27591 / A909 / CDC SS700) protein is tRNA (guanine-N(1)-)-methyltransferase.